The chain runs to 248 residues: 2,3-bisphosphoglycerate-dependent phosphoglycerate mutase (248 aa).

Substrate contacts are provided by residues 8 to 15 (RHGESTWN), 21 to 22 (TG), R60, 87 to 90 (ERHY), K98, 114 to 115 (RR), and 183 to 184 (GN). H9 functions as the Tele-phosphohistidine intermediate in the catalytic mechanism. The Proton donor/acceptor role is filled by E87.

This sequence belongs to the phosphoglycerate mutase family. BPG-dependent PGAM subfamily. As to quaternary structure, homodimer.

The enzyme catalyses (2R)-2-phosphoglycerate = (2R)-3-phosphoglycerate. Its pathway is carbohydrate degradation; glycolysis; pyruvate from D-glyceraldehyde 3-phosphate: step 3/5. Its function is as follows. Catalyzes the interconversion of 2-phosphoglycerate and 3-phosphoglycerate. The protein is 2,3-bisphosphoglycerate-dependent phosphoglycerate mutase of Burkholderia vietnamiensis (strain G4 / LMG 22486) (Burkholderia cepacia (strain R1808)).